We begin with the raw amino-acid sequence, 559 residues long: 5'-AMP-activated protein kinase catalytic subunit alpha-1 (559 aa).

The region spanning 27-279 is the Protein kinase domain; it reads YILGDTLGVG…IKDIREHEWF (253 aa). At T32 the chain carries Phosphothreonine. Residues 33–41 and K56 contribute to the ATP site; that span reads LGVGTFGKV. The active-site Proton acceptor is D150. The residue at position 183 (T183) is a Phosphothreonine; by LKB1 and CaMKK2. T269 and T355 each carry phosphothreonine. The interval 302–381 is AIS; the sequence is EALKEVCEKF…PERVPFLVAE (80 aa). Residue S356 is modified to Phosphoserine. S360 is modified (phosphoserine; by ULK1). Position 368 is a phosphothreonine; by ULK1 (T368). T382 bears the Phosphothreonine mark. S397 is modified (phosphoserine; by ULK1). Phosphoserine is present on residues S467 and S486. The interval 484–536 is disordered; it reads AKSGTATPQRSGSISNYRSCQRSDSDAEAQGKPSEVSLTSSVTSLDSSPVDVA. The span at 485 to 505 shows a compositional bias: polar residues; sequence KSGTATPQRSGSISNYRSCQR. Position 486 is a phosphoserine; by ULK1 (S486). T488 bears the Phosphothreonine; by ULK1 mark. T490 is modified (phosphothreonine). 4 positions are modified to phosphoserine: S496, S508, S524, and S527. Low complexity predominate over residues 516 to 535; sequence PSEVSLTSSVTSLDSSPVDV.

Belongs to the protein kinase superfamily. CAMK Ser/Thr protein kinase family. SNF1 subfamily. In terms of assembly, AMPK is a heterotrimer of an alpha catalytic subunit (PRKAA1 or PRKAA2), a beta (PRKAB1 or PRKAB2) and a gamma non-catalytic subunits (PRKAG1, PRKAG2 or PRKAG3). Interacts with FNIP1 and FNIP2. Requires Mg(2+) as cofactor. In terms of processing, ubiquitinated. Post-translationally, phosphorylated at Thr-183 by STK11/LKB1 in complex with STE20-related adapter-alpha (STRADA) pseudo kinase and CAB39. Also phosphorylated at Thr-183 by CAMKK2; triggered by a rise in intracellular calcium ions, without detectable changes in the AMP/ATP ratio. CAMKK1 can also phosphorylate Thr-183, but at a much lower level. Dephosphorylated by protein phosphatase 2A and 2C (PP2A and PP2C). Phosphorylated by ULK1 and ULK2; leading to negatively regulate AMPK activity and suggesting the existence of a regulatory feedback loop between ULK1, ULK2 and AMPK. There is some ambiguity for some phosphosites: Ser-360/Thr-368 and Ser-486/Thr-488. Dephosphorylated by PPM1A and PPM1B. Glycosylated; O-GlcNAcylated by OGT, promoting the AMP-activated protein kinase (AMPK) activity. Low expression in kidney, liver, lung, heart and brain.

The protein localises to the cytoplasm. It localises to the nucleus. It carries out the reaction L-seryl-[protein] + ATP = O-phospho-L-seryl-[protein] + ADP + H(+). The enzyme catalyses L-threonyl-[protein] + ATP = O-phospho-L-threonyl-[protein] + ADP + H(+). The catalysed reaction is L-seryl-[acetyl-CoA carboxylase] + ATP = O-phospho-L-seryl-[acetyl-CoA carboxylase] + ADP + H(+). It catalyses the reaction L-seryl-[3-hydroxy-3-methylglutaryl-coenzyme A reductase] + ATP = O-phospho-L-seryl-[3-hydroxy-3-methylglutaryl-coenzyme A reductase] + ADP + H(+). It carries out the reaction L-seryl-[tau protein] + ATP = O-phospho-L-seryl-[tau protein] + ADP + H(+). The enzyme catalyses L-threonyl-[tau protein] + ATP = O-phospho-L-threonyl-[tau protein] + ADP + H(+). Its activity is regulated as follows. Activated by phosphorylation on Thr-183. Binding of AMP to non-catalytic gamma subunit (PRKAG1, PRKAG2 or PRKAG3) results in allosteric activation, inducing phosphorylation on Thr-183. AMP-binding to gamma subunit also sustains activity by preventing dephosphorylation of Thr-183. ADP also stimulates Thr-183 phosphorylation, without stimulating already phosphorylated AMPK. ATP promotes dephosphorylation of Thr-183, rendering the enzyme inactive. Under physiological conditions AMPK mainly exists in its inactive form in complex with ATP, which is much more abundant than AMP. Selectively inhibited by compound C (6-[4-(2-Piperidin-1-yl-ethoxy)-phenyl)]-3-pyridin-4-yl-pyyrazolo[1,5-a] pyrimidine. Activated by resveratrol, a natural polyphenol present in red wine, and S17834, a synthetic polyphenol. Functionally, catalytic subunit of AMP-activated protein kinase (AMPK), an energy sensor protein kinase that plays a key role in regulating cellular energy metabolism. In response to reduction of intracellular ATP levels, AMPK activates energy-producing pathways and inhibits energy-consuming processes: inhibits protein, carbohydrate and lipid biosynthesis, as well as cell growth and proliferation. AMPK acts via direct phosphorylation of metabolic enzymes, and by longer-term effects via phosphorylation of transcription regulators. Regulates lipid synthesis by phosphorylating and inactivating lipid metabolic enzymes such as ACACA, ACACB, GYS1, HMGCR and LIPE; regulates fatty acid and cholesterol synthesis by phosphorylating acetyl-CoA carboxylase (ACACA and ACACB) and hormone-sensitive lipase (LIPE) enzymes, respectively. Promotes lipolysis of lipid droplets by mediating phosphorylation of isoform 1 of CHKA (CHKalpha2). Regulates insulin-signaling and glycolysis by phosphorylating IRS1, PFKFB2 and PFKFB3. AMPK stimulates glucose uptake in muscle by increasing the translocation of the glucose transporter SLC2A4/GLUT4 to the plasma membrane, possibly by mediating phosphorylation of TBC1D4/AS160. Regulates transcription and chromatin structure by phosphorylating transcription regulators involved in energy metabolism such as CRTC2/TORC2, FOXO3, histone H2B, HDAC5, MEF2C, MLXIPL/ChREBP, EP300, HNF4A, p53/TP53, SREBF1, SREBF2 and PPARGC1A. Acts as a key regulator of glucose homeostasis in liver by phosphorylating CRTC2/TORC2, leading to CRTC2/TORC2 sequestration in the cytoplasm. In response to stress, phosphorylates 'Ser-36' of histone H2B (H2BS36ph), leading to promote transcription. Acts as a key regulator of cell growth and proliferation by phosphorylating FNIP1, TSC2, RPTOR, WDR24 and ATG1/ULK1: in response to nutrient limitation, negatively regulates the mTORC1 complex by phosphorylating RPTOR component of the mTORC1 complex and by phosphorylating and activating TSC2. Also phosphorylates and inhibits GATOR2 subunit WDR24 in response to nutrient limitation, leading to suppress glucose-mediated mTORC1 activation. In response to energetic stress, phosphorylates FNIP1, inactivating the non-canonical mTORC1 signaling, thereby promoting nuclear translocation of TFEB and TFE3, and inducing transcription of lysosomal or autophagy genes. In response to nutrient limitation, promotes autophagy by phosphorylating and activating ATG1/ULK1. In that process, it also activates WDR45/WIPI4. Phosphorylates CASP6, thereby preventing its autoprocessing and subsequent activation. In response to nutrient limitation, phosphorylates transcription factor FOXO3 promoting FOXO3 mitochondrial import. Also acts as a regulator of cellular polarity by remodeling the actin cytoskeleton; probably by indirectly activating myosin. AMPK also acts as a regulator of circadian rhythm by mediating phosphorylation of CRY1, leading to destabilize it. May regulate the Wnt signaling pathway by phosphorylating CTNNB1, leading to stabilize it. Also has tau-protein kinase activity: in response to amyloid beta A4 protein (APP) exposure, activated by CAMKK2, leading to phosphorylation of MAPT/TAU; however the relevance of such data remains unclear in vivo. Also phosphorylates CFTR, EEF2K, KLC1, NOS3 and SLC12A1. Regulates hepatic lipogenesis. Activated via SIRT3, represses sterol regulatory element-binding protein (SREBP) transcriptional activities and ATP-consuming lipogenesis to restore cellular energy balance. Upon stress, regulates mitochondrial fragmentation through phosphorylation of MTFR1L. The protein is 5'-AMP-activated protein kinase catalytic subunit alpha-1 (Prkaa1) of Rattus norvegicus (Rat).